Here is a 302-residue protein sequence, read N- to C-terminus: Nucleotide-binding protein SERP0433 (302 aa).

18–25 (GMSGAGKS) contacts ATP. GTP is bound at residue 69-72 (DLRG).

Belongs to the RapZ-like family.

In terms of biological role, displays ATPase and GTPase activities. This is Nucleotide-binding protein SERP0433 from Staphylococcus epidermidis (strain ATCC 35984 / DSM 28319 / BCRC 17069 / CCUG 31568 / BM 3577 / RP62A).